Reading from the N-terminus, the 197-residue chain is Auxin-responsive protein IAA31 (197 aa).

Disordered stretches follow at residues 1-43 (MENL…DQAK) and 66-90 (SCLQPTTTTTKSKPPPAAAAAETQQ). The EAR-like (transcriptional repression) signature appears at 9–13 (LRLGL). In terms of domain architecture, PB1 spans 99 to 186 (GLFVKVSMDG…TCKRLRIMKG (88 aa)).

Belongs to the Aux/IAA family. As to quaternary structure, homodimers and heterodimers. Highly expressed in etiolated seedlings. Expressed in roots.

It localises to the nucleus. In terms of biological role, aux/IAA proteins are short-lived transcriptional factors that function as repressors of early auxin response genes at low auxin concentrations. This chain is Auxin-responsive protein IAA31 (IAA31), found in Oryza sativa subsp. japonica (Rice).